We begin with the raw amino-acid sequence, 140 residues long: Large-conductance mechanosensitive channel (140 aa).

2 helical membrane-spanning segments follow: residues 11 to 31 and 82 to 102; these read FAMR…GAFG and GNFI…FLLV.

Belongs to the MscL family. In terms of assembly, homopentamer.

It is found in the cell inner membrane. Functionally, channel that opens in response to stretch forces in the membrane lipid bilayer. May participate in the regulation of osmotic pressure changes within the cell. The chain is Large-conductance mechanosensitive channel from Parabacteroides distasonis (strain ATCC 8503 / DSM 20701 / CIP 104284 / JCM 5825 / NCTC 11152).